Consider the following 412-residue polypeptide: ORC1-type DNA replication protein 2 (412 aa).

ATP is bound by residues 61–65 (VGKTA), tyrosine 207, and arginine 219.

The protein belongs to the CDC6/cdc18 family.

Its function is as follows. Involved in regulation of DNA replication. The polypeptide is ORC1-type DNA replication protein 2 (cdc6b) (Haloarcula marismortui (strain ATCC 43049 / DSM 3752 / JCM 8966 / VKM B-1809) (Halobacterium marismortui)).